A 662-amino-acid chain; its full sequence is 72 kDa type IV collagenase (662 aa).

The signal sequence occupies residues 1–29 (MEALGARGALAGFLRALCVLGCLLGRATA). The propeptide at 30 to 109 (PPSPVIKFPG…PRCGNPDVAN (80 aa)) is activation peptide. The Cysteine switch signature appears at 100–107 (PRCGNPDV). C102 serves as a coordination point for Zn(2+). The tract at residues 110 to 221 (YNFFPRKPKW…LWTLGEGQVV (112 aa)) is collagenase-like 1. Residues D134 and D168 each contribute to the Ca(2+) site. H178 and D180 together coordinate Zn(2+). Ca(2+) contacts are provided by D185 and G186. H193 contributes to the Zn(2+) binding site. Ca(2+) contacts are provided by G200, G202, and D204. H206 is a Zn(2+) binding site. Positions 208, 209, and 211 each coordinate Ca(2+). A collagen-binding region spans residues 222–396 (RVKYGNADGE…WGFCPDQGYS (175 aa)). Fibronectin type-II domains lie at 228-276 (ADGE…FCPH), 286-334 (ADGQ…FCPE), and 344-392 (SEGA…FCPD). 6 disulfides stabilise this stretch: C233/C259, C247/C274, C291/C317, C305/C332, C349/C375, and C363/C390. The interval 397-467 (LFLVAAHEFG…GPTPTLGPVT (71 aa)) is collagenase-like 2. H403 provides a ligand contact to Zn(2+). E404 is a catalytic residue. Zn(2+)-binding residues include H407 and H413. Residues 414-662 (SQDPGALMAP…GSIKTDWLGC (249 aa)) are required for inhibitor TIMP2 binding. C471 and C662 are disulfide-bonded. 4 Hemopexin repeats span residues 474 to 518 (DIVF…WPEL), 519 to 565 (PEKI…GLPP), 567 to 615 (VQRV…WNAI), and 616 to 662 (PDHL…WLGC). Ca(2+) is bound by residues D478, D523, and D571. N575 carries N-linked (GlcNAc...) asparagine glycosylation. D620 contacts Ca(2+). The N-linked (GlcNAc...) asparagine glycan is linked to N644.

This sequence belongs to the peptidase M10A family. In terms of assembly, interacts (via the C-terminal hemopexin-like domains-containing region) with the integrin alpha-V/beta-3; the interaction promotes vascular invasion in angiogenic vessels and melamoma cells. Interacts (via the C-terminal PEX domain) with TIMP2 (via the C-terminal); the interaction inhibits the degradation activity. Interacts with GSK3B. Ca(2+) serves as cofactor. Zn(2+) is required as a cofactor. Phosphorylation on multiple sites modulates enzymatic activity. Phosphorylated by PKC in vitro. In terms of processing, the propeptide is processed by MMP14 (MT-MMP1) and MMP16 (MT-MMP3). Autocatalytic cleavage in the C-terminal produces the anti-angiogenic peptide, PEX. This processing appears to be facilitated by binding integrinv/beta3.

It localises to the secreted. It is found in the extracellular space. The protein localises to the extracellular matrix. Its subcellular location is the membrane. The protein resides in the nucleus. It catalyses the reaction Cleavage of gelatin type I and collagen types IV, V, VII, X. Cleaves the collagen-like sequence Pro-Gln-Gly-|-Ile-Ala-Gly-Gln.. Functionally, ubiquitinous metalloproteinase that is involved in diverse functions such as remodeling of the vasculature, angiogenesis, tissue repair, tumor invasion, inflammation, and atherosclerotic plaque rupture. As well as degrading extracellular matrix proteins, can also act on several nonmatrix proteins such as big endothelial 1 and beta-type CGRP promoting vasoconstriction. Also cleaves KISS at a Gly-|-Leu bond. Appears to have a role in myocardial cell death pathways. Contributes to myocardial oxidative stress by regulating the activity of GSK3beta. Cleaves GSK3beta in vitro. Involved in the formation of the fibrovascular tissues. PEX, the C-terminal non-catalytic fragment of MMP2, possesses anti-angiogenic and anti-tumor properties and inhibits cell migration and cell adhesion to FGF2 and vitronectin. Ligand for integrin alpha-v/beta-3 on the surface of blood vessels. The protein is 72 kDa type IV collagenase (MMP2) of Oryctolagus cuniculus (Rabbit).